A 509-amino-acid polypeptide reads, in one-letter code: Bifunctional purine biosynthesis protein PurH (509 aa).

The MGS-like domain occupies 1-145 (MIKRALISVF…KSFKDVVVIS (145 aa)).

Belongs to the PurH family.

The catalysed reaction is (6R)-10-formyltetrahydrofolate + 5-amino-1-(5-phospho-beta-D-ribosyl)imidazole-4-carboxamide = 5-formamido-1-(5-phospho-D-ribosyl)imidazole-4-carboxamide + (6S)-5,6,7,8-tetrahydrofolate. It carries out the reaction IMP + H2O = 5-formamido-1-(5-phospho-D-ribosyl)imidazole-4-carboxamide. It participates in purine metabolism; IMP biosynthesis via de novo pathway; 5-formamido-1-(5-phospho-D-ribosyl)imidazole-4-carboxamide from 5-amino-1-(5-phospho-D-ribosyl)imidazole-4-carboxamide (10-formyl THF route): step 1/1. Its pathway is purine metabolism; IMP biosynthesis via de novo pathway; IMP from 5-formamido-1-(5-phospho-D-ribosyl)imidazole-4-carboxamide: step 1/1. The protein is Bifunctional purine biosynthesis protein PurH of Brachyspira hyodysenteriae (strain ATCC 49526 / WA1).